The sequence spans 440 residues: GTPase Der (440 aa).

2 EngA-type G domains span residues 3-167 and 176-351; these read PIIA…PYDR and TRIA…EQYC. GTP is bound by residues 9–16, 56–60, 119–122, 182–189, 229–233, and 294–297; these read GRPNVGKS, DTGGF, NKVD, DTAGI, and NKWD. The KH-like domain occupies 352–436; that stretch reads KRVTTGELNR…PLKLIFRGRD (85 aa).

It belongs to the TRAFAC class TrmE-Era-EngA-EngB-Septin-like GTPase superfamily. EngA (Der) GTPase family. Associates with the 50S ribosomal subunit.

GTPase that plays an essential role in the late steps of ribosome biogenesis. In Citrifermentans bemidjiense (strain ATCC BAA-1014 / DSM 16622 / JCM 12645 / Bem) (Geobacter bemidjiensis), this protein is GTPase Der.